The chain runs to 395 residues: Flap endonuclease 1 (395 aa).

The tract at residues 1–104 (MGIKHLYQII…GELAKRIARK (104 aa)) is N-domain. Mg(2+) is bound at residue aspartate 34. Residues arginine 47 and arginine 70 each coordinate DNA. Residue aspartate 86 participates in Mg(2+) binding. The segment at 103 to 123 (RKQEAAEQHEEAKETGTTEDV) is disordered. The tract at residues 122-253 (DVEKFSRRTV…NTALKLIRDH (132 aa)) is I-domain. Glutamate 158, glutamate 160, aspartate 179, and aspartate 181 together coordinate Mg(2+). Glutamate 158 is a binding site for DNA. Positions 231 and 233 each coordinate DNA. Aspartate 233 serves as a coordination point for Mg(2+). The interaction with PCNA stretch occupies residues 341 to 349 (QQSRLEGFF). Residues 356-389 (DEEKASLKRKHEEKLEAAKKKKKEDAKAKREAKS) show a composition bias toward basic and acidic residues. The interval 356–395 (DEEKASLKRKHEEKLEAAKKKKKEDAKAKREAKSRPKGTA) is disordered.

The protein belongs to the XPG/RAD2 endonuclease family. FEN1 subfamily. Interacts with PCNA. Three molecules of FEN1 bind to one PCNA trimer with each molecule binding to one PCNA monomer. PCNA stimulates the nuclease activity without altering cleavage specificity. Mg(2+) is required as a cofactor. In terms of processing, phosphorylated. Phosphorylation upon DNA damage induces relocalization to the nuclear plasma.

It localises to the nucleus. It is found in the nucleolus. The protein resides in the nucleoplasm. The protein localises to the mitochondrion. Functionally, structure-specific nuclease with 5'-flap endonuclease and 5'-3' exonuclease activities involved in DNA replication and repair. During DNA replication, cleaves the 5'-overhanging flap structure that is generated by displacement synthesis when DNA polymerase encounters the 5'-end of a downstream Okazaki fragment. It enters the flap from the 5'-end and then tracks to cleave the flap base, leaving a nick for ligation. Also involved in the long patch base excision repair (LP-BER) pathway, by cleaving within the apurinic/apyrimidinic (AP) site-terminated flap. Acts as a genome stabilization factor that prevents flaps from equilibrating into structures that lead to duplications and deletions. Also possesses 5'-3' exonuclease activity on nicked or gapped double-stranded DNA, and exhibits RNase H activity. Also involved in replication and repair of rDNA and in repairing mitochondrial DNA. This Uncinocarpus reesii (strain UAMH 1704) protein is Flap endonuclease 1.